A 228-amino-acid chain; its full sequence is Ribonuclease HII (228 aa).

One can recognise an RNase H type-2 domain in the interval 11–202 (GPVAGVDEAG…VVAAAQLHGM (192 aa)). A divalent metal cation-binding residues include Asp17, Glu18, and Asp111.

The protein belongs to the RNase HII family. Requires Mn(2+) as cofactor. It depends on Mg(2+) as a cofactor.

Its subcellular location is the cytoplasm. The catalysed reaction is Endonucleolytic cleavage to 5'-phosphomonoester.. Endonuclease that specifically degrades the RNA of RNA-DNA hybrids. This is Ribonuclease HII from Saccharopolyspora erythraea (strain ATCC 11635 / DSM 40517 / JCM 4748 / NBRC 13426 / NCIMB 8594 / NRRL 2338).